The chain runs to 275 residues: 2,3,4,5-tetrahydropyridine-2,6-dicarboxylate N-succinyltransferase (275 aa).

Substrate-binding residues include arginine 108 and aspartate 145.

This sequence belongs to the transferase hexapeptide repeat family. As to quaternary structure, homotrimer.

The protein resides in the cytoplasm. It catalyses the reaction (S)-2,3,4,5-tetrahydrodipicolinate + succinyl-CoA + H2O = (S)-2-succinylamino-6-oxoheptanedioate + CoA. It functions in the pathway amino-acid biosynthesis; L-lysine biosynthesis via DAP pathway; LL-2,6-diaminopimelate from (S)-tetrahydrodipicolinate (succinylase route): step 1/3. This is 2,3,4,5-tetrahydropyridine-2,6-dicarboxylate N-succinyltransferase from Jannaschia sp. (strain CCS1).